Here is a 1288-residue protein sequence, read N- to C-terminus: 5-oxoprolinase (1288 aa).

Thr-151 carries the post-translational modification Phosphothreonine. A disordered region spans residues Gly-1249–Pro-1269. Ser-1265 bears the Phosphoserine mark.

Belongs to the oxoprolinase family. As to quaternary structure, homodimer. As to expression, expressed in coronary artery and kidney.

The protein localises to the cytoplasm. It is found in the cytosol. The catalysed reaction is 5-oxo-L-proline + ATP + 2 H2O = L-glutamate + ADP + phosphate + H(+). In terms of biological role, catalyzes the cleavage of 5-oxo-L-proline to form L-glutamate coupled to the hydrolysis of ATP to ADP and inorganic phosphate. The sequence is that of 5-oxoprolinase (OPLAH) from Bos taurus (Bovine).